Reading from the N-terminus, the 245-residue chain is MYPVDLHAHTIASTHAYSTVSEYFQQAKKKGIKLFAITDHGPDMDDAPHEWHFSNLPVIPRMVDGVGILYGIEANIKNIKGEIDCTEKMSKKLDIVLAGFHDPVMGSLGMVDNTKALIATISSGLVQVITHPGNPKYPIDIKEVAKVAAEFNVALEMNNSSFIHSRVGSEKNCIEIAKAVLDAGGLIALGSDSHIASSLGNFERVLEVLAEIQFPQQKILNTSPRKVLDFLQAHGKKEITAFQHL.

Residues H7, H9, H15, H40, E73, H101, H131, D192, and H194 each contribute to the Zn(2+) site.

Belongs to the PHP family. As to quaternary structure, homotrimer. Requires Zn(2+) as cofactor.

This Proteus mirabilis (strain HI4320) protein is Probable phosphatase PMI1003.